The primary structure comprises 127 residues: Large ribosomal subunit protein bL12 (127 aa).

Positions 98–127 are disordered; that stretch reads PKPIKEGAPKAEAESLKSKLEEAGAEVELK.

Belongs to the bacterial ribosomal protein bL12 family. As to quaternary structure, homodimer. Part of the ribosomal stalk of the 50S ribosomal subunit. Forms a multimeric L10(L12)X complex, where L10 forms an elongated spine to which 2 to 4 L12 dimers bind in a sequential fashion. Binds GTP-bound translation factors.

Functionally, forms part of the ribosomal stalk which helps the ribosome interact with GTP-bound translation factors. Is thus essential for accurate translation. The chain is Large ribosomal subunit protein bL12 from Amoebophilus asiaticus (strain 5a2).